The sequence spans 398 residues: Bifunctional enzyme IspD/IspF (398 aa).

The interval 1-237 (MSISIAAIIL…QKKMQMFPDI (237 aa)) is 2-C-methyl-D-erythritol 4-phosphate cytidylyltransferase. The interval 238-398 (RVGNGYDVHS…SVLYPGEIPQ (161 aa)) is 2-C-methyl-D-erythritol 2,4-cyclodiphosphate synthase. Residues Asp244 and His246 each contribute to the a divalent metal cation site. 4-CDP-2-C-methyl-D-erythritol 2-phosphate-binding positions include 244-246 (DVH) and 270-271 (HS). His278 lines the a divalent metal cation pocket. Residues 292-294 (DIG), 368-371 (TTNE), Phe375, and Arg378 contribute to the 4-CDP-2-C-methyl-D-erythritol 2-phosphate site.

The protein in the N-terminal section; belongs to the IspD/TarI cytidylyltransferase family. IspD subfamily. This sequence in the C-terminal section; belongs to the IspF family. A divalent metal cation serves as cofactor.

It catalyses the reaction 2-C-methyl-D-erythritol 4-phosphate + CTP + H(+) = 4-CDP-2-C-methyl-D-erythritol + diphosphate. The catalysed reaction is 4-CDP-2-C-methyl-D-erythritol 2-phosphate = 2-C-methyl-D-erythritol 2,4-cyclic diphosphate + CMP. The protein operates within isoprenoid biosynthesis; isopentenyl diphosphate biosynthesis via DXP pathway; isopentenyl diphosphate from 1-deoxy-D-xylulose 5-phosphate: step 2/6. It functions in the pathway isoprenoid biosynthesis; isopentenyl diphosphate biosynthesis via DXP pathway; isopentenyl diphosphate from 1-deoxy-D-xylulose 5-phosphate: step 4/6. In terms of biological role, bifunctional enzyme that catalyzes the formation of 4-diphosphocytidyl-2-C-methyl-D-erythritol from CTP and 2-C-methyl-D-erythritol 4-phosphate (MEP) (IspD), and catalyzes the conversion of 4-diphosphocytidyl-2-C-methyl-D-erythritol 2-phosphate (CDP-ME2P) to 2-C-methyl-D-erythritol 2,4-cyclodiphosphate (ME-CPP) with a corresponding release of cytidine 5-monophosphate (CMP) (IspF). This is Bifunctional enzyme IspD/IspF from Bartonella tribocorum (strain CIP 105476 / IBS 506).